The following is a 250-amino-acid chain: Ribosomal RNA small subunit methyltransferase J (250 aa).

S-adenosyl-L-methionine contacts are provided by residues 101–102 (RD), 117–118 (ER), 153–154 (SS), and aspartate 171.

This sequence belongs to the methyltransferase superfamily. RsmJ family.

The protein resides in the cytoplasm. It catalyses the reaction guanosine(1516) in 16S rRNA + S-adenosyl-L-methionine = N(2)-methylguanosine(1516) in 16S rRNA + S-adenosyl-L-homocysteine + H(+). Its function is as follows. Specifically methylates the guanosine in position 1516 of 16S rRNA. This is Ribosomal RNA small subunit methyltransferase J from Erwinia tasmaniensis (strain DSM 17950 / CFBP 7177 / CIP 109463 / NCPPB 4357 / Et1/99).